A 258-amino-acid chain; its full sequence is Cyclohexa-1,5-dienecarbonyl-CoA hydratase (258 aa).

It belongs to the enoyl-CoA hydratase/isomerase family.

It catalyses the reaction cyclohexa-1,5-diene-1-carbonyl-CoA + H2O = 6-hydroxycyclohex-1-ene-1-carbonyl-CoA. The protein operates within aromatic compound metabolism; benzoyl-CoA degradation. In terms of biological role, catalyzes the hydration of cyclohexa-1,5-diene-1-carboxyl-CoA. The protein is Cyclohexa-1,5-dienecarbonyl-CoA hydratase (dch) of Thauera aromatica.